A 310-amino-acid chain; its full sequence is MPITIKSRSKGLRDTEIDLSKKPTLDDVLKKISANNHNISKYRIRLTYKKESKQVPVISESFFQEEADDSMEFFIKDLGPQISWRLVFFCEYLGPVLVHSLFYYLSTIPTVVDRWHSASSDYNPFLNRVAYFLILGHYGKRLFETLFVHQFSLATMPIFNLFKNCFHYWVLSGLISFGYFGYGFPFGNAKLFKYYSYLKLDDLSTLIGLFVLSELWNFYCHIKLRLWGDYQKKHGNAKIRVPLNQGIFNLFVAPNYTFEVWSWIWFTFVFKFNLFAVLFLTVSTAQMYAWAQKKNKKYHTRRAFLIPFVF.

Topologically, residues 1 to 85 (MPITIKSRSK…KDLGPQISWR (85 aa)) are cytoplasmic. The chain crosses the membrane as a helical span at residues 86–106 (LVFFCEYLGPVLVHSLFYYLS). Residues 107-141 (TIPTVVDRWHSASSDYNPFLNRVAYFLILGHYGKR) are Lumenal-facing. Residues 142-162 (LFETLFVHQFSLATMPIFNLF) form a helical membrane-spanning segment. Residues 163-165 (KNC) are Cytoplasmic-facing. A helical transmembrane segment spans residues 166–186 (FHYWVLSGLISFGYFGYGFPF). The Lumenal segment spans residues 187-201 (GNAKLFKYYSYLKLD). Residues 202–222 (DLSTLIGLFVLSELWNFYCHI) traverse the membrane as a helical segment. Residues 223 to 242 (KLRLWGDYQKKHGNAKIRVP) are Cytoplasmic-facing. The chain crosses the membrane as a helical span at residues 243–265 (LNQGIFNLFVAPNYTFEVWSWIW). Topologically, residues 266–268 (FTF) are lumenal. A helical transmembrane segment spans residues 269-291 (VFKFNLFAVLFLTVSTAQMYAWA). Topologically, residues 292–310 (QKKNKKYHTRRAFLIPFVF) are cytoplasmic.

This sequence belongs to the steroid 5-alpha reductase family. As to quaternary structure, interacts with the fatty acid elongation system components ELO2 and ELO3. Interacts with NVJ1.

The protein localises to the endoplasmic reticulum membrane. It carries out the reaction a very-long-chain 2,3-saturated fatty acyl-CoA + NADP(+) = a very-long-chain (2E)-enoyl-CoA + NADPH + H(+). The catalysed reaction is octadecanoyl-CoA + NADP(+) = (2E)-octadecenoyl-CoA + NADPH + H(+). The enzyme catalyses (2E)-eicosenoyl-CoA + NADPH + H(+) = eicosanoyl-CoA + NADP(+). It catalyses the reaction (2E)-docosenoyl-CoA + NADPH + H(+) = docosanoyl-CoA + NADP(+). It carries out the reaction (2E)-tetracosenoyl-CoA + NADPH + H(+) = tetracosanoyl-CoA + NADP(+). The catalysed reaction is (2E)-hexacosenoyl-CoA + NADPH + H(+) = hexacosanoyl-CoA + NADP(+). Its pathway is lipid metabolism; fatty acid biosynthesis. Functionally, catalyzes the last of the four reactions of the long-chain fatty acids elongation cycle. This endoplasmic reticulum-bound enzymatic process, allows the addition of 2 carbons to the chain of long- and very long-chain fatty acids/VLCFAs per cycle. This enzyme reduces the trans-2,3-enoyl-CoA fatty acid intermediate to an acyl-CoA that can be further elongated by entering a new cycle of elongation. Thereby, it participates in the production of VLCFAs of different chain lengths that are involved in multiple biological processes as precursors of membrane lipids and lipid mediators. VLCFAs serve for instance as precursors for ceramide and sphingolipids. Required for normal biogenesis of piecemeal microautophagy of the nucleus (PMN) bleps and vesicles during nutrient stress. This Saccharomyces cerevisiae (strain ATCC 204508 / S288c) (Baker's yeast) protein is Very-long-chain enoyl-CoA reductase (TSC13).